The chain runs to 76 residues: Protein MATERNALLY EXPRESSED GENE 4 (76 aa).

The N-terminal stretch at 1–27 (MEYRKRVDALVFFSLLLLGYFAAHAHG) is a signal peptide. Cysteines 53 and 75 form a disulfide.

This sequence belongs to the MEG family. In terms of tissue distribution, expressed exclusively in endosperm.

The protein is Protein MATERNALLY EXPRESSED GENE 4 (MEG4) of Zea mays (Maize).